The following is a 119-amino-acid chain: Ribonuclease P protein component (119 aa).

This sequence belongs to the RnpA family. In terms of assembly, consists of a catalytic RNA component (M1 or rnpB) and a protein subunit.

It carries out the reaction Endonucleolytic cleavage of RNA, removing 5'-extranucleotides from tRNA precursor.. Its function is as follows. RNaseP catalyzes the removal of the 5'-leader sequence from pre-tRNA to produce the mature 5'-terminus. It can also cleave other RNA substrates such as 4.5S RNA. The protein component plays an auxiliary but essential role in vivo by binding to the 5'-leader sequence and broadening the substrate specificity of the ribozyme. This chain is Ribonuclease P protein component, found in Dictyoglomus turgidum (strain DSM 6724 / Z-1310).